Consider the following 118-residue polypeptide: Large ribosomal subunit protein bL20 (118 aa).

This sequence belongs to the bacterial ribosomal protein bL20 family.

Its function is as follows. Binds directly to 23S ribosomal RNA and is necessary for the in vitro assembly process of the 50S ribosomal subunit. It is not involved in the protein synthesizing functions of that subunit. The chain is Large ribosomal subunit protein bL20 from Edwardsiella ictaluri (strain 93-146).